The primary structure comprises 124 residues: Small ribosomal subunit protein uS12c (124 aa).

2 disordered regions span residues methionine 1–proline 28 and alanine 104–threonine 124. Composition is skewed to basic residues over residues glutamate 11–lysine 20 and aspartate 109–threonine 124.

The protein belongs to the universal ribosomal protein uS12 family. As to quaternary structure, part of the 30S ribosomal subunit.

The protein resides in the plastid. It is found in the chloroplast. In terms of biological role, with S4 and S5 plays an important role in translational accuracy. Located at the interface of the 30S and 50S subunits. This Gracilaria tenuistipitata var. liui (Red alga) protein is Small ribosomal subunit protein uS12c (rps12).